Reading from the N-terminus, the 444-residue chain is Phosphoglucosamine mutase (444 aa).

Serine 102 serves as the catalytic Phosphoserine intermediate. 4 residues coordinate Mg(2+): serine 102, aspartate 241, aspartate 243, and aspartate 245. The residue at position 102 (serine 102) is a Phosphoserine.

Belongs to the phosphohexose mutase family. Mg(2+) is required as a cofactor. Post-translationally, activated by phosphorylation.

It catalyses the reaction alpha-D-glucosamine 1-phosphate = D-glucosamine 6-phosphate. Functionally, catalyzes the conversion of glucosamine-6-phosphate to glucosamine-1-phosphate. This chain is Phosphoglucosamine mutase, found in Glaesserella parasuis serovar 5 (strain SH0165) (Haemophilus parasuis).